Here is a 260-residue protein sequence, read N- to C-terminus: 5'-nucleotidase SurE (260 aa).

Positions 8, 9, 43, and 96 each coordinate a divalent metal cation.

The protein belongs to the SurE nucleotidase family. A divalent metal cation serves as cofactor.

The protein localises to the cytoplasm. It carries out the reaction a ribonucleoside 5'-phosphate + H2O = a ribonucleoside + phosphate. Functionally, nucleotidase that shows phosphatase activity on nucleoside 5'-monophosphates. This is 5'-nucleotidase SurE from Ruegeria sp. (strain TM1040) (Silicibacter sp.).